We begin with the raw amino-acid sequence, 284 residues long: uncharacterized protein (284 aa).

Positions 1-23 (MKRGCAIAVMICGLITSVSAASA) are cleaved as a signal peptide.

This sequence belongs to the surface antigen msp4 family.

This is an uncharacterized protein from Brucella abortus (strain 2308).